Consider the following 268-residue polypeptide: Tryptophan synthase alpha chain (268 aa).

Active-site proton acceptor residues include Glu49 and Asp60.

It belongs to the TrpA family. Tetramer of two alpha and two beta chains.

The catalysed reaction is (1S,2R)-1-C-(indol-3-yl)glycerol 3-phosphate + L-serine = D-glyceraldehyde 3-phosphate + L-tryptophan + H2O. Its pathway is amino-acid biosynthesis; L-tryptophan biosynthesis; L-tryptophan from chorismate: step 5/5. The alpha subunit is responsible for the aldol cleavage of indoleglycerol phosphate to indole and glyceraldehyde 3-phosphate. The sequence is that of Tryptophan synthase alpha chain from Aliivibrio fischeri (strain ATCC 700601 / ES114) (Vibrio fischeri).